Here is a 165-residue protein sequence, read N- to C-terminus: Basic leucine zipper 43 (165 aa).

In terms of domain architecture, bZIP spans 70-133 (NERKQKRKIS…EKVIEENVQL (64 aa)). Residues 72-93 (RKQKRKISNRESARRSRMRKQR) form a basic motif region. The leucine-zipper stretch occupies residues 98–112 (LWSQVMWLRDENHQL).

As to quaternary structure, forms heterodimers with BZIP34 and BZIP61.

Its subcellular location is the nucleus. Probable transcription factor involved in somatic embryogenesis. Acts as a positive regulator of BHLH109. The polypeptide is Basic leucine zipper 43 (Arabidopsis thaliana (Mouse-ear cress)).